The sequence spans 193 residues: BH3-interacting domain death agonist (193 aa).

A BH3 motif is present at residues 87–101 (IAAQLAEIGDQLDKQ).

In terms of assembly, forms heterodimers either with the pro-apoptotic protein BAX or the anti-apoptotic protein Bcl-2.

The protein resides in the cytoplasm. The protein localises to the mitochondrion outer membrane. Its function is as follows. Induces caspases and apoptosis. Counters the protective effect of Bcl-2. The protein is BH3-interacting domain death agonist (BID) of Gallus gallus (Chicken).